Here is a 462-residue protein sequence, read N- to C-terminus: MENKKENFSEWYNEIVTISDLSDKRYPIKGMNVWRPYGWKIMKLIDNIIRNAVDKHSFDEVNFPVLISRGMLEVEFEHIRGFENEIYWVTKGGKEKLEEELALRPTSESAMYPMFSLWVRSHADLPLKIYQIVSVYRYETKHTRSFIRIREIHFFEAHTAHESYEDAEKQMDEYRIIWTEIADALCLPFLYDQRPEWDKFPGAMYTIAFDTVMPSGRSLQIGTIHQYGTNFSKNYDIKYLKEDGTFEYVHQTTFGMSERLLAAIIGIHGDDKGLILPPAIAPIQVVIVPIPGEGVERYAKDIETTLNGIGIRCHVDNRDNYTPGYKYNDWEMRGVPLRIEVGERELKEKTVTLAARNIRGKKTVQREKLVYEVPDMLDLVKEKITEDAKKTFNSLVVSASSLDDFKKEGLIKAFWCGSKECSDKIENETEKSALGFNLNNDETGKCIVCGKAGKLAIFSRSY.

Belongs to the class-II aminoacyl-tRNA synthetase family. ProS type 3 subfamily. In terms of assembly, homodimer.

The protein resides in the cytoplasm. The enzyme catalyses tRNA(Pro) + L-proline + ATP = L-prolyl-tRNA(Pro) + AMP + diphosphate. Functionally, catalyzes the attachment of proline to tRNA(Pro) in a two-step reaction: proline is first activated by ATP to form Pro-AMP and then transferred to the acceptor end of tRNA(Pro). This chain is Proline--tRNA ligase, found in Thermoplasma volcanium (strain ATCC 51530 / DSM 4299 / JCM 9571 / NBRC 15438 / GSS1).